Consider the following 182-residue polypeptide: MNKLSTKLVVAIGIGAALYGILGLWGFSIAPNTFIKPALAILTVFGALFGPVAGLLIGLIGHTVTDTIAGWGIWWGWVISSGIIGFAMGLIQKRVGFSVKNGTYNKGDISYLAITGLIGIVIAIIFAGAFDIIVMGEPFDKIVIQVLGATIADVIVFLVLGLPITIGLAKSNKKHTQLKIEK.

5 helical membrane passes run 9 to 29 (VVAI…GFSI), 40 to 60 (AILT…IGLI), 71 to 91 (WGIW…MGLI), 114 to 134 (ITGL…DIIV), and 142 to 162 (IVIQ…VLGL).

Belongs to the UPF0397 family.

Its subcellular location is the cell membrane. The protein is UPF0397 protein BCA_2731 of Bacillus cereus (strain 03BB102).